The primary structure comprises 243 residues: Dirigent protein 16 (243 aa).

Positions M1 to A24 are cleaved as a signal peptide.

Belongs to the plant dirigent protein family. In terms of assembly, homodimer.

It is found in the secreted. The protein localises to the extracellular space. Its subcellular location is the apoplast. Dirigent proteins impart stereoselectivity on the phenoxy radical-coupling reaction, yielding optically active lignans from two molecules of coniferyl alcohol in the biosynthesis of lignans, flavonolignans, and alkaloids and thus plays a central role in plant secondary metabolism. The sequence is that of Dirigent protein 16 (DIR16) from Arabidopsis thaliana (Mouse-ear cress).